The primary structure comprises 203 residues: VDTGREQAKRVVRNGKKETTTLPLCWTAGANTVVSDQDQEPIRIWILTCWWFLTVGILLGSWWAYHELGWGGWWFWDPVENASFMPWVLATACIHSVILPLLHSWTLFLNIVTFLCCVLGTFSIRSGLLASVHSFATDDTRGIFLWWFFLLMTGISMILFYQMKQQASVRRTYKKEMVVARSTLVHLRHSARAQPRPVMLWKN.

2 helical membrane passes run Ile-44–Ala-64 and Ile-143–Met-163.

This sequence belongs to the CcmF/CycK/Ccl1/NrfE/CcsA family. Interacts with CCMFC, CCMFN1, CCMH and CYTC-1.

It is found in the mitochondrion inner membrane. Functionally, forms a complex with CCMFC, CCMFN1 and CCMH that performs the assembly of heme with c-type apocytochromes in mitochondria. In Arabidopsis thaliana (Mouse-ear cress), this protein is Cytochrome c biogenesis CcmF N-terminal-like mitochondrial protein 2.